A 422-amino-acid chain; its full sequence is Adenosylhomocysteinase (422 aa).

Residues Asp129 and Glu154 each contribute to the substrate site. 155 to 157 (TTT) contacts NAD(+). The substrate site is built by Lys184 and Asp188. Residues Asn189, 218 to 223 (GYGWCG), Glu241, Asn276, 297 to 299 (AGH), and Asn344 contribute to the NAD(+) site.

The protein belongs to the adenosylhomocysteinase family. It depends on NAD(+) as a cofactor.

Its subcellular location is the cytoplasm. It carries out the reaction S-adenosyl-L-homocysteine + H2O = L-homocysteine + adenosine. Its pathway is amino-acid biosynthesis; L-homocysteine biosynthesis; L-homocysteine from S-adenosyl-L-homocysteine: step 1/1. Functionally, may play a key role in the regulation of the intracellular concentration of adenosylhomocysteine. The polypeptide is Adenosylhomocysteinase (Pyrococcus abyssi (strain GE5 / Orsay)).